The sequence spans 308 residues: MKSKHVAVLLGGFSSERPVSLSSGKACADALENEGYQVTRVDVGRDVGSVLAELKPDVAFNALHGPFGEDGTIQGILEYLGIPYTHSGVLASALAMNKEQAKKIVKTVGVPVAESKVANRFAIQNKHPMKPPYVIKPVNEGSSFGVVIVSEGQSHPPQVVGSSEWKYGDTVMVERYIHGRELTCAVMGDVALGVCEIIPTGHSFYDYDSKYVAGGSKHECPAKVSPNIYQKIQTLALKAHQAVGCRGVSRSDFRYDDRHSENGEVVWLEVNTQPGMTPTSLVPEIAAHAGHSFGELLSWMVEDASCLR.

The region spanning 102-302 (KKIVKTVGVP…FGELLSWMVE (201 aa)) is the ATP-grasp domain. 128 to 183 (PMKPPYVIKPVNEGSSFGVVIVSEGQSHPPQVVGSSEWKYGDTVMVERYIHGRELT) is a binding site for ATP. Mg(2+) contacts are provided by Asp-252, Glu-269, and Asn-271.

The protein belongs to the D-alanine--D-alanine ligase family. The cofactor is Mg(2+). Requires Mn(2+) as cofactor.

It localises to the cytoplasm. It carries out the reaction 2 D-alanine + ATP = D-alanyl-D-alanine + ADP + phosphate + H(+). Its pathway is cell wall biogenesis; peptidoglycan biosynthesis. Cell wall formation. In Mesorhizobium japonicum (strain LMG 29417 / CECT 9101 / MAFF 303099) (Mesorhizobium loti (strain MAFF 303099)), this protein is D-alanine--D-alanine ligase B.